We begin with the raw amino-acid sequence, 158 residues long: MTRPDSGSSPAPLSEARRRKRNPLPTVLGITALLGLAGFIAFGNLNKSLEYFVTPTEYQQQAAQLKGRPVRIGGLVKAVKYNPQSLELSFTVTDGGASFPVRYRGAVSDLFKENQGVVVRGEFEGQTFQARELIVKHSEQYDVPKTQAELRDLLEQSE.

The span at 1 to 11 (MTRPDSGSSPA) shows a compositional bias: polar residues. The disordered stretch occupies residues 1–20 (MTRPDSGSSPAPLSEARRRK). Residues 1-23 (MTRPDSGSSPAPLSEARRRKRNP) are Cytoplasmic-facing. Residues 24-44 (LPTVLGITALLGLAGFIAFGN) traverse the membrane as a helical; Signal-anchor for type II membrane protein segment. Topologically, residues 45–158 (LNKSLEYFVT…ELRDLLEQSE (114 aa)) are extracellular. The heme site is built by histidine 137 and tyrosine 141.

It belongs to the CcmE/CycJ family.

The protein resides in the cell membrane. Heme chaperone required for the biogenesis of c-type cytochromes. Transiently binds heme delivered by CcmC and transfers the heme to apo-cytochromes in a process facilitated by CcmF and CcmH. This is Cytochrome c-type biogenesis protein CcmE from Deinococcus deserti (strain DSM 17065 / CIP 109153 / LMG 22923 / VCD115).